Consider the following 370-residue polypeptide: Isopentenyl-diphosphate delta-isomerase (370 aa).

Position 8-9 (8-9 (RK)) interacts with substrate. FMN is bound by residues Thr65, 66–68 (GMT), Ser99, and Asn127. 99-101 (SQR) serves as a coordination point for substrate. Gln166 contacts substrate. Glu167 serves as a coordination point for Mg(2+). FMN-binding positions include Lys198, Ser223, Thr228, 277–279 (GMR), and 298–299 (AL).

This sequence belongs to the IPP isomerase type 2 family. As to quaternary structure, homooctamer. Dimer of tetramers. FMN is required as a cofactor. Requires NADPH as cofactor. It depends on Mg(2+) as a cofactor.

The protein resides in the cytoplasm. The enzyme catalyses isopentenyl diphosphate = dimethylallyl diphosphate. Functionally, involved in the biosynthesis of isoprenoids. Catalyzes the 1,3-allylic rearrangement of the homoallylic substrate isopentenyl (IPP) to its allylic isomer, dimethylallyl diphosphate (DMAPP). The sequence is that of Isopentenyl-diphosphate delta-isomerase from Pyrococcus abyssi (strain GE5 / Orsay).